The primary structure comprises 141 residues: Large ribosomal subunit protein uL11 (141 aa).

This sequence belongs to the universal ribosomal protein uL11 family. As to quaternary structure, part of the ribosomal stalk of the 50S ribosomal subunit. Interacts with L10 and the large rRNA to form the base of the stalk. L10 forms an elongated spine to which L12 dimers bind in a sequential fashion forming a multimeric L10(L12)X complex. One or more lysine residues are methylated.

Its function is as follows. Forms part of the ribosomal stalk which helps the ribosome interact with GTP-bound translation factors. This Thermosipho africanus (strain TCF52B) protein is Large ribosomal subunit protein uL11.